Reading from the N-terminus, the 107-residue chain is Large ribosomal subunit protein uL24 (107 aa).

The protein belongs to the universal ribosomal protein uL24 family. Part of the 50S ribosomal subunit.

One of two assembly initiator proteins, it binds directly to the 5'-end of the 23S rRNA, where it nucleates assembly of the 50S subunit. Its function is as follows. One of the proteins that surrounds the polypeptide exit tunnel on the outside of the subunit. This Mesomycoplasma hyopneumoniae (strain J / ATCC 25934 / NCTC 10110) (Mycoplasma hyopneumoniae) protein is Large ribosomal subunit protein uL24.